A 211-amino-acid chain; its full sequence is Thiamine-phosphate synthase (211 aa).

4-amino-2-methyl-5-(diphosphooxymethyl)pyrimidine-binding positions include 37–41 (QLRIK) and Asn69. Asp70 and Asp89 together coordinate Mg(2+). Ser108 serves as a coordination point for 4-amino-2-methyl-5-(diphosphooxymethyl)pyrimidine. 134–136 (TQT) lines the 2-[(2R,5Z)-2-carboxy-4-methylthiazol-5(2H)-ylidene]ethyl phosphate pocket. Lys137 contributes to the 4-amino-2-methyl-5-(diphosphooxymethyl)pyrimidine binding site. Residues Gly166 and 186–187 (VS) contribute to the 2-[(2R,5Z)-2-carboxy-4-methylthiazol-5(2H)-ylidene]ethyl phosphate site.

Belongs to the thiamine-phosphate synthase family. Mg(2+) is required as a cofactor.

It carries out the reaction 2-[(2R,5Z)-2-carboxy-4-methylthiazol-5(2H)-ylidene]ethyl phosphate + 4-amino-2-methyl-5-(diphosphooxymethyl)pyrimidine + 2 H(+) = thiamine phosphate + CO2 + diphosphate. The enzyme catalyses 2-(2-carboxy-4-methylthiazol-5-yl)ethyl phosphate + 4-amino-2-methyl-5-(diphosphooxymethyl)pyrimidine + 2 H(+) = thiamine phosphate + CO2 + diphosphate. The catalysed reaction is 4-methyl-5-(2-phosphooxyethyl)-thiazole + 4-amino-2-methyl-5-(diphosphooxymethyl)pyrimidine + H(+) = thiamine phosphate + diphosphate. It functions in the pathway cofactor biosynthesis; thiamine diphosphate biosynthesis; thiamine phosphate from 4-amino-2-methyl-5-diphosphomethylpyrimidine and 4-methyl-5-(2-phosphoethyl)-thiazole: step 1/1. In terms of biological role, condenses 4-methyl-5-(beta-hydroxyethyl)thiazole monophosphate (THZ-P) and 2-methyl-4-amino-5-hydroxymethyl pyrimidine pyrophosphate (HMP-PP) to form thiamine monophosphate (TMP). This chain is Thiamine-phosphate synthase, found in Escherichia coli O9:H4 (strain HS).